Reading from the N-terminus, the 102-residue chain is NADH-quinone oxidoreductase subunit K 1 (102 aa).

3 helical membrane passes run 5-25, 31-51, and 65-85; these read ISHY…GIFL, IIIL…MVAF, and LFIL…LVVF.

It belongs to the complex I subunit 4L family. As to quaternary structure, NDH-1 is composed of 14 different subunits. Subunits NuoA, H, J, K, L, M, N constitute the membrane sector of the complex.

It localises to the cell inner membrane. It carries out the reaction a quinone + NADH + 5 H(+)(in) = a quinol + NAD(+) + 4 H(+)(out). In terms of biological role, NDH-1 shuttles electrons from NADH, via FMN and iron-sulfur (Fe-S) centers, to quinones in the respiratory chain. The immediate electron acceptor for the enzyme in this species is believed to be ubiquinone. Couples the redox reaction to proton translocation (for every two electrons transferred, four hydrogen ions are translocated across the cytoplasmic membrane), and thus conserves the redox energy in a proton gradient. This Rhizobium meliloti (strain 1021) (Ensifer meliloti) protein is NADH-quinone oxidoreductase subunit K 1.